We begin with the raw amino-acid sequence, 824 residues long: MASPALRHFLPRFGAAAAAASFLSLAGCQLGGGDPETVLPASGTFPLKGLAQNVSVRRNNMGMPLIESSTYHDALFTLGYVHAGDRIGQMLGMRLLAQGRLSEVAGADALEVDRLMRSVNLKRNASDLYNAASPRLKRFFDVYARGVNAYLFRYRDKLPADVARAGYTPEYWKPEDSALIFSLLNFSLSVNLQEELSALVLAQKVGADKLAWLLPTYPDEELPFAEADKLKGLNLSNQVTGLSDLNRIALQLSDLNMLGVAASSNWAIAPQRSRSGKSLLASDMQLPAGLNSAWSFVQIRAPKYQVSGASIAGLPLVLSGFNGKLAWSMSNVKGDNQDLFLEKIKREGNRVSYMADGKWVPAASHQETFLVKGGSPIRETVYETRHGALLNASATPPGNGLSLALQVPDFKDDKSLDAFFDLSRAPNVEKAFDTSREIRAITLNMVFADASNIGWQVTGRFPNRREGQGLLPSPGWDGKYDWDGFADSMLHPYDQDPRQGWLAAANQRTIPKGYGMQLSNSWGYPERAERIAELANSGKQDLRSTVAMQYDQTTTFAAKLKTIFQAPGMSKPLKQAIDALPEADRNNAREAFTRLMAFDGKLSATSADAALYELFLQESAKQIFLDELGPETSPAWQALVANASSSYSPQADHLLGRDDSPYWDDVKTPQKEDKPAILARSLAAAVTRGDSLLGSDHKAWQWGKLHRDNWTSANPLARQLGGGEFNRSASAAGGDHTTLNVSGFEWGKGFDARVAPSLRMIVDFSLVEPMTGMINTGQSGNPASPYYANSIEPWQKGQYMSIPLQQQNYEKGYGKQRLTLTPGK.

The signal sequence occupies residues 1–26 (MASPALRHFLPRFGAAAAAASFLSLA). Residue serine 264 is the Nucleophile of the active site.

It belongs to the peptidase S45 family. As to quaternary structure, heterodimer of an alpha subunit and a beta subunit processed from the same precursor.

It is found in the periplasm. It catalyses the reaction an N-acyl-L-homoserine lactone + H2O = L-homoserine lactone + a carboxylate. In terms of biological role, catalyzes the deacylation of acyl-homoserine lactone (AHL or acyl-HSL), releasing homoserine lactone (HSL) and the corresponding fatty acid. Possesses a specificity for the degradation of long-chain acyl-HSLs (side chains of seven or more carbons in length). The protein is Acyl-homoserine lactone acylase QuiP (quiP) of Pseudomonas syringae pv. tomato (strain ATCC BAA-871 / DC3000).